A 163-amino-acid chain; its full sequence is ADP-ribosylation factor-like protein 2-binding protein (163 aa).

The protein belongs to the ARL2BP family. Found in a complex with ARL2BP, ARL2 and SLC25A6. Found in a complex with ARL2, ARL2BP and SLC25A4. Interacts with STAT2, STAT3 and STAT4. Interacts with GTP-bound ARL2 and ARL3; the complex ARL2-ARL2BP as well as ARL2BP alone, binds to SLC25A4. Interaction with ARL2 may be required for targeting to cilia basal body. Interacts with STAT3; interaction is enhanced with ARL2. Expressed in retina pigment epithelial cells (at protein level). Widely expressed.

The protein resides in the cytoplasm. Its subcellular location is the mitochondrion intermembrane space. It localises to the cytoskeleton. It is found in the microtubule organizing center. The protein localises to the centrosome. The protein resides in the nucleus. Its subcellular location is the spindle. It localises to the cilium basal body. Together with ARL2, plays a role in the nuclear translocation, retention and transcriptional activity of STAT3. May play a role as an effector of ARL2. In Homo sapiens (Human), this protein is ADP-ribosylation factor-like protein 2-binding protein (ARL2BP).